Here is a 751-residue protein sequence, read N- to C-terminus: ABC transporter G family member 22 (751 aa).

The tract at residues 26–81 is disordered; it reads ADIRSPHGSMDANGVPATAPAAVGGGGTLSRKSSRRLMGMSPGRSSGAGTHIRKSR. The 247-residue stretch at 157 to 403 folds into the ABC transporter domain; the sequence is LKFRDVTYKV…FSSIGCSPLI (247 aa). Position 197 to 204 (197 to 204) interacts with ATP; it reads GPSGSGKT. Residues 498–707 form the ABC transmembrane type-2 domain; it reads EQYCILFCRG…TYKLLLKVQY (210 aa). A run of 6 helical transmembrane segments spans residues 516-536, 552-572, 602-622, 634-654, 666-686, and 722-742; these read FSWLRVTQVLSTAVILGLLWW, LLFFIAVFWGFFPVFTAIFAF, LPLDFILPSLFLLVVYFMTGL, LTVFLCIIAAQGLGLAIGAIL, VTVMTFMLAGGFFVKKVPVFI, and GLTEVAALVVMIFGYRLLAYL.

It belongs to the ABC transporter superfamily. ABCG family. Eye pigment precursor importer (TC 3.A.1.204) subfamily.

It is found in the membrane. The sequence is that of ABC transporter G family member 22 (ABCG22) from Arabidopsis thaliana (Mouse-ear cress).